The following is a 118-amino-acid chain: D-dopachrome decarboxylase (118 aa).

Position 2 is an N-acetylproline (P2).

This sequence belongs to the MIF family. Homotrimer.

The protein localises to the cytoplasm. The enzyme catalyses D-dopachrome + H(+) = 5,6-dihydroxyindole + CO2. Its function is as follows. Tautomerization of D-dopachrome with decarboxylation to give 5,6-dihydroxyindole (DHI). The protein is D-dopachrome decarboxylase (ddt) of Xenopus tropicalis (Western clawed frog).